The sequence spans 106 residues: Small ribosomal subunit protein bS16 (106 aa).

Residues 84 to 106 (KREARNNPEKAVPRKERKAADGK) form a disordered region.

In Rhodopseudomonas palustris (strain ATCC BAA-98 / CGA009), this protein is Small ribosomal subunit protein bS16.